Consider the following 491-residue polypeptide: Alpha-2-antiplasmin (491 aa).

Residues Met1–Ala27 form the signal peptide. A propeptide spanning residues Val28 to Gln39 is cleaved from the precursor. A disulfide bridge links Cys70 with Cys143. N-linked (GlcNAc...) asparagine glycosylation is found at Asn126, Asn295, Asn309, and Asn316. The disordered stretch occupies residues Ser439 to Lys491. Tyr484 carries the sulfotyrosine modification.

The protein belongs to the serpin family. Forms protease inhibiting heterodimer with TMPRSS7. Proteolytically cleaved at Pro-35 by both the prolyl endopeptidase FAP form and antiplasmin-cleaving enzyme FAP soluble form to generate mature alpha-2-antiplasmin. As to expression, expressed by the liver and secreted in plasma.

It localises to the secreted. Serine protease inhibitor. The major targets of this inhibitor are plasmin and trypsin, but it also inactivates matriptase-3/TMPRSS7 and chymotrypsin. In Mus musculus (Mouse), this protein is Alpha-2-antiplasmin (Serpinf2).